We begin with the raw amino-acid sequence, 230 residues long: Urease accessory protein UreF (230 aa).

Belongs to the UreF family. As to quaternary structure, ureD, UreF and UreG form a complex that acts as a GTP-hydrolysis-dependent molecular chaperone, activating the urease apoprotein by helping to assemble the nickel containing metallocenter of UreC. The UreE protein probably delivers the nickel.

The protein localises to the cytoplasm. Required for maturation of urease via the functional incorporation of the urease nickel metallocenter. The sequence is that of Urease accessory protein UreF from Cupriavidus taiwanensis (strain DSM 17343 / BCRC 17206 / CCUG 44338 / CIP 107171 / LMG 19424 / R1) (Ralstonia taiwanensis (strain LMG 19424)).